Consider the following 183-residue polypeptide: ADP-ribosylation factor-like protein 5 (183 aa).

GTP is bound by residues Gly-27–Thr-34, Asp-70–Gln-74, and Asn-129–Asp-132.

This sequence belongs to the small GTPase superfamily. Arf family.

Its function is as follows. May bind and exchange GTP and GDP. The sequence is that of ADP-ribosylation factor-like protein 5 (arl5) from Dictyostelium discoideum (Social amoeba).